Consider the following 495-residue polypeptide: Aspartyl/glutamyl-tRNA(Asn/Gln) amidotransferase subunit B (495 aa).

The protein belongs to the GatB/GatE family. GatB subfamily. Heterotrimer of A, B and C subunits.

It carries out the reaction L-glutamyl-tRNA(Gln) + L-glutamine + ATP + H2O = L-glutaminyl-tRNA(Gln) + L-glutamate + ADP + phosphate + H(+). It catalyses the reaction L-aspartyl-tRNA(Asn) + L-glutamine + ATP + H2O = L-asparaginyl-tRNA(Asn) + L-glutamate + ADP + phosphate + 2 H(+). Functionally, allows the formation of correctly charged Asn-tRNA(Asn) or Gln-tRNA(Gln) through the transamidation of misacylated Asp-tRNA(Asn) or Glu-tRNA(Gln) in organisms which lack either or both of asparaginyl-tRNA or glutaminyl-tRNA synthetases. The reaction takes place in the presence of glutamine and ATP through an activated phospho-Asp-tRNA(Asn) or phospho-Glu-tRNA(Gln). The protein is Aspartyl/glutamyl-tRNA(Asn/Gln) amidotransferase subunit B of Halobacterium salinarum (strain ATCC 700922 / JCM 11081 / NRC-1) (Halobacterium halobium).